A 175-amino-acid polypeptide reads, in one-letter code: MSSQIRQNYSTEVEAAVNRLVNMHLRASYTYLSLGFYFDRDDVALEGVGHFFRELAEEKREGAERFLKMQNQRGGRALFQDVQKPSQDEWGKTLDAMEAALLLEKSLNQALLDLHALGSARADPHLCDFLENHFLDEEVKLIKKMGDHLTNLRRLATPQAGLGEYLFERLTLKHD.

Serine 2 is modified (N-acetylserine). The region spanning glutamine 7 to alanine 156 is the Ferritin-like diiron domain. 5 residues coordinate Fe cation: glutamate 54, glutamate 57, glutamate 58, glutamate 61, and glutamate 64.

The protein belongs to the ferritin family. In terms of assembly, oligomer of 24 subunits. There are two types of subunits: L (light) chain and H (heavy) chain. The major chain can be light or heavy, depending on the species and tissue type. The functional molecule forms a roughly spherical shell with a diameter of 12 nm and contains a central cavity into which the insoluble mineral iron core is deposited. Interacts with NCOA4.

It is found in the cytoplasmic vesicle. The protein resides in the autophagosome. It localises to the cytoplasm. Its subcellular location is the autolysosome. Stores iron in a soluble, non-toxic, readily available form. Important for iron homeostasis. Iron is taken up in the ferrous form and deposited as ferric hydroxides after oxidation. Also plays a role in delivery of iron to cells. Mediates iron uptake in capsule cells of the developing kidney. Delivery to lysosomes by the cargo receptor NCOA4 for autophagic degradation and release or iron. The polypeptide is Ferritin light chain (FTL) (Canis lupus familiaris (Dog)).